The chain runs to 170 residues: Peptide deformylase (170 aa).

Fe cation contacts are provided by Cys-92 and His-134. The active site involves Glu-135. His-138 is a binding site for Fe cation.

It belongs to the polypeptide deformylase family. Fe(2+) is required as a cofactor.

It carries out the reaction N-terminal N-formyl-L-methionyl-[peptide] + H2O = N-terminal L-methionyl-[peptide] + formate. Functionally, removes the formyl group from the N-terminal Met of newly synthesized proteins. Requires at least a dipeptide for an efficient rate of reaction. N-terminal L-methionine is a prerequisite for activity but the enzyme has broad specificity at other positions. In Chromohalobacter salexigens (strain ATCC BAA-138 / DSM 3043 / CIP 106854 / NCIMB 13768 / 1H11), this protein is Peptide deformylase.